An 832-amino-acid chain; its full sequence is Mechanosensitive cation channel TMEM63B (832 aa).

Residues 1–40 (MLPFLLATLGTTALNNSNPKDYCYSARIRSTVLQGLPFGG) lie on the Extracellular side of the membrane. Residues 41-65 (VPTVLALDFMCFLALLFLFSILRKV) form a helical membrane-spanning segment. Residue Cys51 is the site of S-palmitoyl cysteine attachment. Residues 66-145 (AWDYGRLALV…KDDEIRDKCG (80 aa)) are Cytoplasmic-facing. The short motif at 86 to 88 (RDR) is the Mediates endoplasmic reticulum retention element. Residues Ser111, Ser113, Ser114, and Ser115 each carry the phosphoserine modification. Cys126 is lipidated: S-palmitoyl cysteine. The chain crosses the membrane as a helical span at residues 146-178 (GDAVHYLSFQRHIIGLLVVVGVLSVGIVLPVNF). Topologically, residues 179-202 (SGDLLENNAYSFGRTTIANLKSGN) are extracellular. Residues 203–227 (NLLWLHTSFAFLYLLLTVYSMRRHT) form a helical membrane-spanning segment. Topologically, residues 228–427 (SKMRYKEDDL…IYWEHLSIRG (200 aa)) are cytoplasmic. The segment at 231–426 (RYKEDDLVKR…NIYWEHLSIR (196 aa)) is intracellular linker IL2; confers mechanosensitivity. S-palmitoyl cysteine attachment occurs at residues Cys382 and Cys398. A helical transmembrane segment spans residues 428 to 457 (FIWWLRCLVINVVLFILLFFLTTPAIIITT). At 458-472 (MDKFNVTKPVEYLNN) the chain is on the extracellular side. Asn462 carries an N-linked (GlcNAc...) asparagine glycan. The helical transmembrane segment at 473–502 (PIITQFFPTLLLWCFSALLPTIVYYSAFFE) threads the bilayer. The Cytoplasmic portion of the chain corresponds to 503 to 506 (AHWT). Residues 507–543 (RSGENRTTMHKCYTFLIFMVLLLPSLGLSSLDLFFRW) form a helical membrane-spanning segment. Residues 544-566 (LFDKKFLAEAAIRFECVFLPDNG) lie on the Extracellular side of the membrane. A helical membrane pass occupies residues 567–599 (AFFVNYVIASAFIGNAMDLLRIPGLLMYMIRLC). The segment at 567 to 599 (AFFVNYVIASAFIGNAMDLLRIPGLLMYMIRLC) is gating helix. At 600–619 (LARSAAERRNVKRHQAYEFQ) the chain is on the cytoplasmic side. A helical membrane pass occupies residues 620–638 (FGAAYAWMMCVFTVVMTYS). At 639–641 (ITC) the chain is on the extracellular side. A helical membrane pass occupies residues 642–666 (PIIVPFGLMYMLLKHLVDRYNLYYA). Residues 667-673 (YLPAKLD) lie on the Cytoplasmic side of the membrane. Residues 674–702 (KKIHSGAVNQVVAAPILCLFWLLFFSTMR) form a helical membrane-spanning segment. Topologically, residues 703–707 (TGFLA) are extracellular. A helical membrane pass occupies residues 708–728 (PTSMFTFVVLVITIVICLCHV). S-palmitoyl cysteine attachment occurs at residues Cys726 and Cys729. The Cytoplasmic segment spans residues 729-832 (CFGHFKYLSA…DSLIENEIHQ (104 aa)). The disordered stretch occupies residues 780 to 814 (EVDGDGDGAPGSSGDEPPSSSSQDEELLMPPDALT). Residues 789–801 (PGSSGDEPPSSSS) show a composition bias toward low complexity.

Belongs to the CSC1 (TC 1.A.17) family. In terms of assembly, monomer. Interacts with SLC19A2; interaction is required for the phospholipid scramblase activity. Palmitoylation is required for localization to the plasma membrane and stability. Post-translationally, N-Glycosylated.

Its subcellular location is the cell membrane. The protein localises to the endoplasmic reticulum membrane. It is found in the lysosome membrane. It localises to the early endosome membrane. It carries out the reaction Ca(2+)(in) = Ca(2+)(out). The enzyme catalyses Mg(2+)(in) = Mg(2+)(out). The catalysed reaction is K(+)(in) = K(+)(out). It catalyses the reaction Na(+)(in) = Na(+)(out). It carries out the reaction Cs(+)(in) = Cs(+)(out). The enzyme catalyses a 1,2-diacyl-sn-glycero-3-phosphocholine(in) = a 1,2-diacyl-sn-glycero-3-phosphocholine(out). The catalysed reaction is a sphingomyelin(in) = a sphingomyelin(out). Its function is as follows. Mechanosensitive cation channel with low conductance and high activation threshold. Osmosensitive cation channel preferentially activated by hypotonic stress. Also acts as a phospholipid scramblase in response to changes in membrane structure: upon changes in membrane curvature and thickness, alters its conformation and translocates phospholipids, such as phosphatidylcholine and sphingomyelin, thereby controlling plasma membrane lipid distribution. Forms a heterodimer with SLC19A2, which mediates phospholipid scramblase activity following Ca(2+) stimulation. Expressed in excitatory neurons of the subfornical organ and functions as a thirst receptor that mediates neuronal response to hyperosmolality to drive thirst and drinking behavior. Facilitates intestinal motility by promoting proliferation of intestinal stem cells. Essential for the baby's first breath and respiration throughout life. Upon lung inflation conducts cation currents in alveolar type 1 and 2 cells triggering lamellar body exocytosis and surfactant secretion into airspace. Acts as an osmosensor in cochlear outer hair cells (OHCs) where it mediates calcium influx and regulatory volume decrease response. Required for the maintenance of OHC morphology, OHC survival and normal hearing. This Homo sapiens (Human) protein is Mechanosensitive cation channel TMEM63B.